Here is a 1484-residue protein sequence, read N- to C-terminus: Cystic fibrosis transmembrane conductance regulator (1484 aa).

At 1–77 (MQRSPLERAN…KLINALRRCF (77 aa)) the chain is on the cytoplasmic side. A helical transmembrane segment spans residues 78-98 (FWRFMFYGLLLYLGEVTKAVQ). Residues 81–365 (FMFYGLLLYL…WAVQMWYDSI (285 aa)) enclose the ABC transmembrane type-1 1 domain. Residues 99 to 122 (PLLLGRIIASYDPDNAHERSIAYY) are Extracellular-facing. Residues 123 to 146 (LGIGLCLLFIVRTLLLHPAVFGLH) traverse the membrane as a helical segment. Over 147–195 (HIGMQMRIALFSLIYKKTLKLSSRVLDKISTGQLVSLLSNNLNKFDEGL) the chain is Cytoplasmic. Residues 196–216 (ALAHFVWIAPLQVMLLMGLLW) traverse the membrane as a helical segment. Residues 217–222 (DLLQAS) lie on the Extracellular side of the membrane. The chain crosses the membrane as a helical span at residues 223–243 (AFCGLAVLVVLVLFQAWLGHR). Residues 244-298 (MMKYRDRRAGKINERLVITAEIIENIQSVKAYCWEEAMENMIESLRETELKLTRK) lie on the Cytoplasmic side of the membrane. A helical transmembrane segment spans residues 299–319 (AAYMRYFNSSAFFFSGFFVVF). Residues 320–339 (LSVLPSMLTKGIVLRKIFTT) are Extracellular-facing. Residues 340–358 (ISFCIVLRMAVTRQFPWAV) form a helical membrane-spanning segment. Topologically, residues 359-859 (QMWYDSIGAI…YLRYMTIHKK (501 aa)) are cytoplasmic. Residues Trp-401, Ser-434, 458–465 (GSTGAGKT), and Gln-493 contribute to the ATP site. The ABC transporter 1 domain maps to 423–646 (SDDKNLIFSN…RPDFSSKLMG (224 aa)). Cys-524 carries S-palmitoyl cysteine lipidation. 2 positions are modified to phosphoserine: Ser-549 and Ser-660. The segment at 654–832 (SAERRNSILT…EEINEEDLKE (179 aa)) is disordered R region. Ser-670 is subject to Phosphoserine; by PKA. Ser-686 bears the Phosphoserine mark. Lys-688 is covalently cross-linked (Glycyl lysine isopeptide (Lys-Gly) (interchain with G-Cter in ubiquitin)). Phosphoserine occurs at positions 700, 712, 737, 768, 791, 796, and 814. The chain crosses the membrane as a helical span at residues 860–880 (LIFVLMMCLVIFLIEVAASLV). In terms of domain architecture, ABC transmembrane type-1 2 spans 860–1159 (LIFVLMMCLV…AVNASIDVDS (300 aa)). The Extracellular portion of the chain corresponds to 881–922 (GLCLFKDGASRMNSTSNLNHTSTLDWFAVIVTNTSTYYMFYI). 3 N-linked (GlcNAc...) asparagine glycosylation sites follow: Asn-893, Asn-899, and Asn-913. The chain crosses the membrane as a discontinuously helical span at residues 923–943 (YVGVADTLLALGFLRGLPLVH). Residues 944–994 (SLISVSKILHQKMLHSVLQAPMSTFNTLKTGSILNRFSKDMAILDDLLPLT) lie on the Cytoplasmic side of the membrane. A helical membrane pass occupies residues 995 to 1015 (IFDFIQLLLIVIGAVTVVSAL). At 1016-1017 (QP) the chain is on the extracellular side. Residues 1018 to 1038 (YIFLASVPVVIAFVLLRAYFL) traverse the membrane as a helical segment. The Cytoplasmic portion of the chain corresponds to 1039–1099 (RTSQQLKQLE…TANWFLYLST (61 aa)). A helical transmembrane segment spans residues 1100-1120 (LRWFQMRIEMVFVIFFILVTF). The Extracellular portion of the chain corresponds to 1121 to 1134 (ISILTTGDGEGKVG). The chain crosses the membrane as a helical span at residues 1135–1155 (IVLTLAMNIMGTLQWAVNASI). The Cytoplasmic portion of the chain corresponds to 1156-1484 (DVDSLMRSVS…TEEEVQDTRL (329 aa)). The ABC transporter 2 domain occupies 1212 to 1445 (MTVQDLTAKY…KSVFKQAISH (234 aa)). ATP-binding positions include Tyr-1221 and 1246–1253 (GRTGSGKS). The interval 1388-1484 (KTLKQAFTNC…TEEEVQDTRL (97 aa)) is interaction with GORASP2. The S-palmitoyl cysteine moiety is linked to residue Cys-1397. Phosphoserine occurs at positions 1446 and 1460. The disordered stretch occupies residues 1463-1484 (LSRPKITALQEETEEEVQDTRL). A compositionally biased stretch (acidic residues) spans 1473-1484 (EETEEEVQDTRL). The PDZ-binding signature appears at 1482–1484 (TRL).

This sequence belongs to the ABC transporter superfamily. ABCC family. CFTR transporter (TC 3.A.1.202) subfamily. As to quaternary structure, monomer; does not require oligomerization for channel activity. May form oligomers in the membrane. Interacts with SLC26A3, SLC26A6 and NHERF1. Interacts with SHANK2. Interacts with MYO6. Interacts (via C-terminus) with GOPC (via PDZ domain); this promotes CFTR internalization and thereby decreases channel activity. Interacts with SLC4A7 through NHERF1. Found in a complex with MYO5B and RAB11A. Interacts with ANO1. Interacts with SLC26A8. Interacts with AHCYL1; the interaction increases CFTR activity. Interacts with CSE1L. The core-glycosylated form interacts with GORASP2 (via PDZ GRASP-type 1 domain) in respone to ER stress. Interacts with MARCHF2; the interaction leads to CFTR ubiqtuitination and degradation. Interacts with ADGRG2. Post-translationally, N-glycosylated. Phosphorylated; cAMP treatment promotes phosphorylation and activates the channel. Dephosphorylation decreases the ATPase activity (in vitro). Phosphorylation at PKA sites activates the channel. Phosphorylation at PKC sites enhances the response to phosphorylation by PKA. Phosphorylated by AMPK; this inhibits channel activity. In terms of processing, ubiquitinated, leading to its degradation in the lysosome. Deubiquitination by USP10 in early endosomes enhances its endocytic recycling to the cell membrane. Ubiquitinated by RNF185 during ER stress. Ubiquitinated by MARCHF2.

It is found in the apical cell membrane. The protein localises to the early endosome membrane. The protein resides in the cell membrane. Its subcellular location is the recycling endosome membrane. It localises to the endoplasmic reticulum membrane. It is found in the nucleus. The enzyme catalyses ATP + H2O + closed Cl(-) channel = ADP + phosphate + open Cl(-) channel.. It catalyses the reaction chloride(in) = chloride(out). It carries out the reaction hydrogencarbonate(in) = hydrogencarbonate(out). The catalysed reaction is ATP + H2O = ADP + phosphate + H(+). In terms of biological role, epithelial ion channel that plays an important role in the regulation of epithelial ion and water transport and fluid homeostasis. Mediates the transport of chloride ions across the cell membrane. Possesses an intrinsic ATPase activity and utilizes ATP to gate its channel; the passive flow of anions through the channel is gated by cycles of ATP binding and hydrolysis by the ATP-binding domains. The ion channel is also permeable to HCO(3)(-); selectivity depends on the extracellular chloride concentration. Exerts its function also by modulating the activity of other ion channels and transporters. Contributes to the regulation of the pH and the ion content of the epithelial fluid layer. Modulates the activity of the epithelial sodium channel (ENaC) complex, in part by regulating the cell surface expression of the ENaC complex. May regulate bicarbonate secretion and salvage in epithelial cells by regulating the transporter SLC4A7. Can inhibit the chloride channel activity of ANO1. Plays a role in the chloride and bicarbonate homeostasis during sperm epididymal maturation and capacitation. In Ornithorhynchus anatinus (Duckbill platypus), this protein is Cystic fibrosis transmembrane conductance regulator.